Here is an 838-residue protein sequence, read N- to C-terminus: Periplasmic nitrate reductase (838 aa).

The segment at residues 1-29 (MKVSRRAFIKQTAAAATASVAGVTLPAGA) is a signal peptide (tat-type signal). The region spanning 41–97 (LKWSKAPCRFCGTGCGVEVAVKDNRVVATQGDPKAEVNRGLNCVKGYFLSKIMYGKD) is the 4Fe-4S Mo/W bis-MGD-type domain. Cys-48, Cys-51, Cys-55, and Cys-83 together coordinate [4Fe-4S] cluster. Mo-bis(molybdopterin guanine dinucleotide)-binding positions include Lys-85, Gln-152, Asn-177, Cys-181, 214–221 (WGSNMAEM), 245–249 (STFTH), Met-382, Gln-386, Asn-492, 518–519 (SD), Lys-541, Asp-568, and 728–737 (TGRVLEHWHS). Residue Trp-804 participates in substrate binding. Mo-bis(molybdopterin guanine dinucleotide) is bound by residues Asn-812 and Lys-829.

It belongs to the prokaryotic molybdopterin-containing oxidoreductase family. NasA/NapA/NarB subfamily. In terms of assembly, component of the periplasmic nitrate reductase NapAB complex composed of NapA and NapB. [4Fe-4S] cluster is required as a cofactor. The cofactor is Mo-bis(molybdopterin guanine dinucleotide). Post-translationally, predicted to be exported by the Tat system. The position of the signal peptide cleavage has not been experimentally proven.

Its subcellular location is the periplasm. The catalysed reaction is 2 Fe(II)-[cytochrome] + nitrate + 2 H(+) = 2 Fe(III)-[cytochrome] + nitrite + H2O. In terms of biological role, catalytic subunit of the periplasmic nitrate reductase complex NapAB. Receives electrons from NapB and catalyzes the reduction of nitrate to nitrite. In Ralstonia pickettii (strain 12J), this protein is Periplasmic nitrate reductase.